Consider the following 472-residue polypeptide: Alanine--anticapsin ligase (472 aa).

Residue glutamate 109 participates in Mg(2+) binding. Lysine 138 and lysine 178 together coordinate ATP. In terms of domain architecture, ATP-grasp spans 142 to 355; it reads RAAFNRAGVK…MAQLLLDVLC (214 aa). Leucine 182 lines the Mg(2+) pocket. ATP-binding positions include 184–185, 226–229, and glutamine 268; these read SS and EEFL. Residues glutamate 273 and 309–311 each bind substrate; that span reads HTE. Positions 311 and 324 each coordinate Mg(2+). Residue 328–331 coordinates substrate; that stretch reads RFAG.

In terms of assembly, monomer or homodimer. It depends on Mg(2+) as a cofactor.

It carries out the reaction L-anticapsin + L-alanine + ATP = bacilysin + ADP + phosphate + H(+). The protein operates within antibiotic biosynthesis; bacilysin biosynthesis. In terms of biological role, part of the bacABCDEFG operon responsible for the biosynthesis of bacilysin, an irreversible inactivator of the glutaminase domain of glucosamine synthetase. Catalyzes the formation of alpha-dipeptides from various L-amino acids in the presence of ATP. In vivo catalyzes the ligation of L-alanine and L-anticapsin (epoxycyclohexanonyl-Ala) to produce the final bacilysin antibiotic (L-Ala-L-4S-cyclohexenonyl-Ala dipeptide). In Bacillus subtilis, this protein is Alanine--anticapsin ligase.